A 78-amino-acid chain; its full sequence is Large ribosomal subunit protein bL28 (78 aa).

The protein belongs to the bacterial ribosomal protein bL28 family.

The chain is Large ribosomal subunit protein bL28 from Legionella pneumophila (strain Paris).